The primary structure comprises 137 residues: Large-conductance mechanosensitive channel (137 aa).

Helical transmembrane passes span 9-29 and 79-99; these read AFAV…GAAF and IQTV…VKAI.

It belongs to the MscL family. Homopentamer.

The protein resides in the cell inner membrane. Functionally, channel that opens in response to stretch forces in the membrane lipid bilayer. May participate in the regulation of osmotic pressure changes within the cell. This chain is Large-conductance mechanosensitive channel, found in Pseudomonas aeruginosa (strain ATCC 15692 / DSM 22644 / CIP 104116 / JCM 14847 / LMG 12228 / 1C / PRS 101 / PAO1).